An 887-amino-acid chain; its full sequence is 3-hydroxy-3-methylglutaryl-coenzyme A reductase (887 aa).

The Cytoplasmic portion of the chain corresponds to 1 to 9; it reads MLSRLFRMH. Residues 10–39 traverse the membrane as a helical segment; sequence GLFVASHPWEVIVGTVTLTICMMSMNMFTG. Topologically, residues 40 to 56 are lumenal; it reads NNKICGWNYECPKFEED. The helical transmembrane segment at 57–78 threads the bilayer; that stretch reads VLSSDIIILTITRCIAILYIYF. An SSD domain is found at 61 to 218; that stretch reads DIIILTITRC…MTFFPACVSL (158 aa). The INSIG-binding motif signature appears at 75-78; it reads YIYF. The Cytoplasmic segment spans residues 79–89; sequence QFQNLRQLGSK. A Glycyl lysine isopeptide (Lys-Gly) (interchain with G-Cter in ubiquitin) cross-link involves residue Lys-89. The helical transmembrane segment at 90–114 threads the bilayer; that stretch reads YILGIAGLFTIFSSFVFSTVVIHFL. At 115–123 the chain is on the lumenal side; it reads DKELTGLNE. A helical membrane pass occupies residues 124 to 149; sequence ALPFFLLLIDLSRASALAKFALSSNS. Residues 150 to 159 are Cytoplasmic-facing; it reads QDEVRENIAR. The helical transmembrane segment at 160–187 threads the bilayer; that stretch reads GMAILGPTFTLDALVECLVIGVGTMSGV. The Lumenal segment spans residues 188–191; the sequence is RQLE. A helical membrane pass occupies residues 192-220; the sequence is IMCCFGCMSVLANYFVFMTFFPACVSLVL. At 221 to 248 the chain is on the cytoplasmic side; the sequence is ELSRESREGRPIWQLSHFARVLEEEENK. Residue Lys-248 forms a Glycyl lysine isopeptide (Lys-Gly) (interchain with G-Cter in ubiquitin) linkage. A helical membrane pass occupies residues 249-275; it reads PNPVTQRVKMIMSLGLVLVHAHSRWIA. At 276-314 the chain is on the lumenal side; that stretch reads DPSPQNSTAEQSKVSLGLAEDVSKRIEPSVSLWQFYLSK. Asn-281 carries an N-linked (GlcNAc...) asparagine glycan. A helical membrane pass occupies residues 315-339; sequence MISMDIEQVITLSLALLLAVKYIFF. Over 340 to 887 the chain is Cytoplasmic; it reads EQAETESTLS…LQGTCTKKAA (548 aa). Active-site charge relay system residues include Glu-558, Lys-690, and Asp-766. The Proton donor role is filled by His-865. Ser-871 carries the phosphoserine; by AMPK modification.

Belongs to the HMG-CoA reductase family. Homotetramer. Homodimer. Interacts (via its SSD) with INSIG1; the interaction, accelerated by sterols, leads to the recruitment of HMGCR to AMFR/gp78 for its ubiquitination by the sterol-mediated ERAD pathway. Interacts with UBIAD1. Post-translationally, undergoes sterol-mediated ubiquitination and ER-associated degradation (ERAD). Accumulation of sterols in the endoplasmic reticulum (ER) membrane, triggers binding of the reductase to the ER membrane protein INSIG1 or INSIG2. The INSIG1 binding leads to the recruitment of the ubiquitin ligase, AMFR/gp78, RNF139 or RNF145, initiating ubiquitination of the reductase. The ubiquitinated reductase is then extracted from the ER membrane and delivered to cytosolic 26S proteosomes by a mechanism probably mediated by the ATPase Valosin-containing protein VCP/p97. The INSIG2-binding leads to the recruitment of the ubiquitin ligase RNF139, initiating ubiquitination of the reductase. Lys-248 is the main site of ubiquitination. Ubiquitination is enhanced by the presence of a geranylgeranylated protein. In terms of processing, N-glycosylated. Deglycosylated by NGLY1 on release from the endoplasmic reticulum (ER) in a sterol-mediated manner. Phosphorylated. Phosphorylation at Ser-871 reduces the catalytic activity.

The protein localises to the endoplasmic reticulum membrane. The protein resides in the peroxisome membrane. It carries out the reaction (R)-mevalonate + 2 NADP(+) + CoA = (3S)-3-hydroxy-3-methylglutaryl-CoA + 2 NADPH + 2 H(+). It functions in the pathway metabolic intermediate biosynthesis; (R)-mevalonate biosynthesis; (R)-mevalonate from acetyl-CoA: step 3/3. Regulated by a negative feedback mechanism through sterols and non-sterol metabolites derived from mevalonate. Phosphorylation at Ser-871 down-regulates the catalytic activity. Catalyzes the conversion of (3S)-hydroxy-3-methylglutaryl-CoA (HMG-CoA) to mevalonic acid, the rate-limiting step in the synthesis of cholesterol and other isoprenoids, thus plays a critical role in cellular cholesterol homeostasis. The protein is 3-hydroxy-3-methylglutaryl-coenzyme A reductase (Hmgcr) of Rattus norvegicus (Rat).